Reading from the N-terminus, the 612-residue chain is Protein MUK1 (612 aa).

Residues 40–50 (EDQNDNERSSC) are compositionally biased toward basic and acidic residues. The segment at 40–66 (EDQNDNERSSCDGDENSTTGERLENNK) is disordered. Polar residues predominate over residues 55–66 (NSTTGERLENNK). A phosphoserine mark is found at Ser-67, Ser-163, Ser-185, and Ser-245. The VPS9 domain maps to 273–414 (TEYNKLLNEK…VEGLTKNDFS (142 aa)). The segment at 494–560 (IRSYTPPHPN…SSASLEHGNR (67 aa)) is disordered. The span at 503–517 (NNTSNNNLHSSNNLN) shows a compositional bias: low complexity. Residues 518-529 (IPRSSSQLSMEL) show a composition bias toward polar residues. Residues 530–542 (SNRDTTEMSRDGS) are compositionally biased toward basic and acidic residues. Residues 543-554 (RSTSSSSRSSAS) show a composition bias toward low complexity.

The protein resides in the cytoplasm. Its function is as follows. Putative GTPase-activating protein. This chain is Protein MUK1 (MUK1), found in Saccharomyces cerevisiae (strain ATCC 204508 / S288c) (Baker's yeast).